Reading from the N-terminus, the 336-residue chain is Inactive serine/threonine-protein kinase PLK5 (336 aa).

Positions 1–65 (MYTVLTGTPP…LDHLLQDDFF (65 aa)) constitute a Protein kinase; truncated domain. Disordered regions lie at residues 109-135 (PCPF…WDGE) and 224-245 (GRTG…LPTP). The 82-residue stretch at 255-336 (LLRFLASEHA…HHALRMLQSI (82 aa)) folds into the POLO box domain.

This sequence belongs to the protein kinase superfamily. Ser/Thr protein kinase family. CDC5/Polo subfamily. Expressed in the brain, neurons and glial cells. Also expressed in highly differentiated cells, such as the serous acini in the parotid gland, distal and proximal tubules of the kidney, tubules of the seminal gland, Kupffer cells and some hepatocytes in the liver, and some cells in the germinal center of lymph nodes (at protein level).

It is found in the nucleus. The protein localises to the nucleolus. The protein resides in the cytoplasm. In terms of biological role, inactive serine/threonine-protein kinase that plays a role in cell cycle progression and neuronal differentiation. The chain is Inactive serine/threonine-protein kinase PLK5 (PLK5) from Homo sapiens (Human).